The primary structure comprises 545 residues: MAHACARGVVAPAPSRVSPRVSGRRVVVARVGTSSAEASAKEAPKKSEAKGANEVQFEAVIGIETHVQINSNTKAFCRCAAVYGAEPNRHTCPVCLGHPGTYPILNAAVVKKAIALGIGLDCSVIRRKSTFDRKQYFYPDLPKGYQISQFDEPYGEHGKLDVVIPVEDGGGVRTIGITRAHIEEDAGKLTHFPAKGNEPGYALADYNRAGVALVEIVSEPDLRTGREVAAYGAELRRLVRYLDVSDGNLSEGSMRCDVNVSVRPVGREAFGTKVEVKNMNSFNAMSRAVDFEIERQTTLIRDGRGDEIVQETRTWDEGRQRTVSMRKKEGLADYRYFPEPDLPPLVFDNAYVDGVKAEMPELPAAIRARYAALGLPDDAVQVLVEDKALVEYFDATIAAGAPAKQAANWLTGDIMAYLKNAKDVTISTMPLRSKDLAEFCSMIENGEISGKIGKDILPDLLVGETGGAGPRAIVEERGLSQISDPAEIEAIVDKVLEENPGQLEQYRGGKDKLKGFFVGKVLAASGGRANPALSNQILMKKLAGE.

Belongs to the GatB/GatE family. GatB subfamily. In terms of assembly, subunit of the heterotrimeric GatCAB amidotransferase (AdT) complex, composed of A, B and C subunits.

It is found in the mitochondrion. Its subcellular location is the plastid. The protein localises to the chloroplast. The enzyme catalyses L-glutamyl-tRNA(Gln) + L-glutamine + ATP + H2O = L-glutaminyl-tRNA(Gln) + L-glutamate + ADP + phosphate + H(+). Allows the formation of correctly charged Gln-tRNA(Gln) through the transamidation of misacylated Glu-tRNA(Gln) in chloroplasts and mitochondria. The reaction takes place in the presence of glutamine and ATP through an activated gamma-phospho-Glu-tRNA(Gln). In Micromonas pusilla (strain CCMP1545) (Picoplanktonic green alga), this protein is Glutamyl-tRNA(Gln) amidotransferase subunit B-1, chloroplastic/mitochondrial.